We begin with the raw amino-acid sequence, 1595 residues long: Pentafunctional AROM polypeptide (1595 aa).

The interval 1-384 (MGVPTKISIL…HEPRASTVSN (384 aa)) is 3-dehydroquinate synthase. Residues 44–46 (DTN), 81–84 (ESSK), 114–116 (GGV), and Asp-119 each bind NAD(+). Arg-130 is a binding site for 7-phospho-2-dehydro-3-deoxy-D-arabino-heptonate. Residue 139-140 (TT) coordinates NAD(+). Asp-146 and Lys-152 together coordinate 7-phospho-2-dehydro-3-deoxy-D-arabino-heptonate. Lys-161 serves as a coordination point for NAD(+). A 7-phospho-2-dehydro-3-deoxy-D-arabino-heptonate-binding site is contributed by Asn-162. Residues 179-182 (FLNT) and Asn-190 contribute to the NAD(+) site. Glu-194 is a binding site for Zn(2+). 7-phospho-2-dehydro-3-deoxy-D-arabino-heptonate is bound by residues 194–197 (EVIK) and Lys-250. Glu-260 serves as the catalytic Proton acceptor; for 3-dehydroquinate synthase activity. 7-phospho-2-dehydro-3-deoxy-D-arabino-heptonate is bound by residues 264 to 268 (RNLLN) and His-271. His-271 provides a ligand contact to Zn(2+). The Proton acceptor; for 3-dehydroquinate synthase activity role is filled by His-275. 2 residues coordinate 7-phospho-2-dehydro-3-deoxy-D-arabino-heptonate: His-287 and Lys-356. Residue His-287 participates in Zn(2+) binding. The EPSP synthase stretch occupies residues 397–842 (VSPGVPKGLD…WDSLAQTFKV (446 aa)). Cys-824 functions as the For EPSP synthase activity in the catalytic mechanism. The segment at 866–1057 (ASIFIIGMRG…RRKENTFFVS (192 aa)) is shikimate kinase. 872-879 (GMRGAGKT) lines the ATP pocket. Residues 1058–1278 (LTLPDLSLAA…AAPGQLSARE (221 aa)) are 3-dehydroquinase. His-1181 functions as the Proton acceptor; for 3-dehydroquinate dehydratase activity in the catalytic mechanism. Lys-1209 functions as the Schiff-base intermediate with substrate; for 3-dehydroquinate dehydratase activity in the catalytic mechanism. The interval 1291–1595 (AKKFAVIGNP…MGVSPSEDIL (305 aa)) is shikimate dehydrogenase.

The protein in the N-terminal section; belongs to the sugar phosphate cyclases superfamily. Dehydroquinate synthase family. This sequence in the 2nd section; belongs to the EPSP synthase family. It in the 3rd section; belongs to the shikimate kinase family. In the 4th section; belongs to the type-I 3-dehydroquinase family. The protein in the C-terminal section; belongs to the shikimate dehydrogenase family. Homodimer. Zn(2+) serves as cofactor.

It is found in the cytoplasm. It catalyses the reaction 7-phospho-2-dehydro-3-deoxy-D-arabino-heptonate = 3-dehydroquinate + phosphate. It carries out the reaction 3-dehydroquinate = 3-dehydroshikimate + H2O. The catalysed reaction is shikimate + NADP(+) = 3-dehydroshikimate + NADPH + H(+). The enzyme catalyses shikimate + ATP = 3-phosphoshikimate + ADP + H(+). It catalyses the reaction 3-phosphoshikimate + phosphoenolpyruvate = 5-O-(1-carboxyvinyl)-3-phosphoshikimate + phosphate. Its pathway is metabolic intermediate biosynthesis; chorismate biosynthesis; chorismate from D-erythrose 4-phosphate and phosphoenolpyruvate: step 2/7. The protein operates within metabolic intermediate biosynthesis; chorismate biosynthesis; chorismate from D-erythrose 4-phosphate and phosphoenolpyruvate: step 3/7. It participates in metabolic intermediate biosynthesis; chorismate biosynthesis; chorismate from D-erythrose 4-phosphate and phosphoenolpyruvate: step 4/7. It functions in the pathway metabolic intermediate biosynthesis; chorismate biosynthesis; chorismate from D-erythrose 4-phosphate and phosphoenolpyruvate: step 5/7. Its pathway is metabolic intermediate biosynthesis; chorismate biosynthesis; chorismate from D-erythrose 4-phosphate and phosphoenolpyruvate: step 6/7. Functionally, the AROM polypeptide catalyzes 5 consecutive enzymatic reactions in prechorismate polyaromatic amino acid biosynthesis. The chain is Pentafunctional AROM polypeptide from Ajellomyces capsulatus (strain G186AR / H82 / ATCC MYA-2454 / RMSCC 2432) (Darling's disease fungus).